A 776-amino-acid chain; its full sequence is DNA topoisomerase 1 (776 aa).

Positions M1 to V111 constitute a Toprim domain. Mg(2+) contacts are provided by E7 and D80. Residues D132–E568 enclose the Topo IA-type catalytic domain. Residues S166–Q171 form an interaction with DNA region. The O-(5'-phospho-DNA)-tyrosine intermediate role is filled by Y304. The C4-type zinc-finger motif lies at C600–C627.

This sequence belongs to the type IA topoisomerase family. As to quaternary structure, monomer. Mg(2+) is required as a cofactor.

It catalyses the reaction ATP-independent breakage of single-stranded DNA, followed by passage and rejoining.. Releases the supercoiling and torsional tension of DNA, which is introduced during the DNA replication and transcription, by transiently cleaving and rejoining one strand of the DNA duplex. Introduces a single-strand break via transesterification at a target site in duplex DNA. The scissile phosphodiester is attacked by the catalytic tyrosine of the enzyme, resulting in the formation of a DNA-(5'-phosphotyrosyl)-enzyme intermediate and the expulsion of a 3'-OH DNA strand. The free DNA strand then undergoes passage around the unbroken strand, thus removing DNA supercoils. Finally, in the religation step, the DNA 3'-OH attacks the covalent intermediate to expel the active-site tyrosine and restore the DNA phosphodiester backbone. The sequence is that of DNA topoisomerase 1 from Rickettsia prowazekii (strain Madrid E).